Here is a 161-residue protein sequence, read N- to C-terminus: Calmodulin-like protein (161 aa).

4 consecutive EF-hand domains span residues 21–56 (EEID…LGQN), 57–92 (PTEQ…MMKE), 93–128 (TDSE…MGMQ), and 129–161 (FSEE…MSNQ). 19 residues coordinate Ca(2+): Asp-34, Asp-36, Asn-38, Thr-40, Glu-45, Asp-70, Asp-72, Asn-74, Gln-76, Glu-81, Asp-106, Asp-108, Asn-110, Glu-117, Asp-142, Asp-144, Asp-146, Glu-148, and Glu-153.

It belongs to the calmodulin family.

Its function is as follows. This protein resembles calmodulin in sequence but possibly resembles troponin C in function. This Caenorhabditis elegans protein is Calmodulin-like protein (cal-1).